A 458-amino-acid chain; its full sequence is ATP synthase subunit beta (458 aa).

148-155 (GGAGVGKT) contributes to the ATP binding site.

This sequence belongs to the ATPase alpha/beta chains family. F-type ATPases have 2 components, CF(1) - the catalytic core - and CF(0) - the membrane proton channel. CF(1) has five subunits: alpha(3), beta(3), gamma(1), delta(1), epsilon(1). CF(0) has three main subunits: a(1), b(2) and c(9-12). The alpha and beta chains form an alternating ring which encloses part of the gamma chain. CF(1) is attached to CF(0) by a central stalk formed by the gamma and epsilon chains, while a peripheral stalk is formed by the delta and b chains.

Its subcellular location is the cell inner membrane. The enzyme catalyses ATP + H2O + 4 H(+)(in) = ADP + phosphate + 5 H(+)(out). Its function is as follows. Produces ATP from ADP in the presence of a proton gradient across the membrane. The catalytic sites are hosted primarily by the beta subunits. The sequence is that of ATP synthase subunit beta from Stutzerimonas stutzeri (strain A1501) (Pseudomonas stutzeri).